The chain runs to 405 residues: Glutamate-pyruvate aminotransferase AlaA (405 aa).

L-alanine-binding residues include Gly-41 and Asn-179. The residue at position 240 (Lys-240) is an N6-(pyridoxal phosphate)lysine. Position 378 (Arg-378) interacts with L-alanine.

This sequence belongs to the class-I pyridoxal-phosphate-dependent aminotransferase family. Homodimer. The cofactor is pyridoxal 5'-phosphate.

The protein localises to the cytoplasm. The catalysed reaction is L-alanine + 2-oxoglutarate = pyruvate + L-glutamate. The protein operates within amino-acid biosynthesis; L-alanine biosynthesis. Functionally, involved in the biosynthesis of alanine. Catalyzes the transamination of pyruvate by glutamate, leading to the formation of L-alanine and 2-oxoglutarate. Is also able to catalyze the reverse reaction. In Escherichia coli (strain K12), this protein is Glutamate-pyruvate aminotransferase AlaA.